We begin with the raw amino-acid sequence, 285 residues long: 2-dehydro-3-deoxyphosphooctonate aldolase (285 aa).

Belongs to the KdsA family.

The protein localises to the cytoplasm. The catalysed reaction is D-arabinose 5-phosphate + phosphoenolpyruvate + H2O = 3-deoxy-alpha-D-manno-2-octulosonate-8-phosphate + phosphate. It functions in the pathway carbohydrate biosynthesis; 3-deoxy-D-manno-octulosonate biosynthesis; 3-deoxy-D-manno-octulosonate from D-ribulose 5-phosphate: step 2/3. The protein operates within bacterial outer membrane biogenesis; lipopolysaccharide biosynthesis. This chain is 2-dehydro-3-deoxyphosphooctonate aldolase, found in Acinetobacter baumannii (strain SDF).